The primary structure comprises 550 residues: MAFLRQTLWILWTFTMVIGQDNEKCSQKTLIGYRLKMSRDGDIAVGETVELRCRSGYTTYARNITATCLQGGTWSEPTATCNKKSCPNPGEIQNGKVIFHGGQDALKYGANISYVCNEGYFLVGREYVRYCMIGASGQMAWSSSPPFCEKEKCHRPKIENGDFKPDKDYYEYNDAVHFECNEGYTLVGPHSIACAVNNTWTSNMPTCELAGCKFPSVTHGYPIQGFSLTYKHKQSVTFACNDGFVLRGSPTITCNVTEWDPPLPKCVLEDIDDPNNSNPGRLHPTPNEKPNGNVFQRSNYTEPPTKPEDTHTAATCDTNCEQPPKILPTSEGFNETTTSNTITKQLEDEKTTSQPNTHITSALTSMKAKGNFTNKTNNSTDLHIASTPTSQDDATPSIPSVQTPNYNTNAPTRTLTSLHIEEGPSNSTTSEKATASTLSHNSHKNDTGGIYTTLNKTTQLPSTNKPTNSQAKSSTKPRVETHNKTTSNPAISLTDSADVPQRPREPTLPPIFRPPASKNRYLEKQLVIGLLTAVALTCGLITLFHYLFFR.

The first 19 residues, 1 to 19, serve as a signal peptide directing secretion; the sequence is MAFLRQTLWILWTFTMVIG. 4 consecutive Sushi domains span residues 23 to 83, 84 to 150, 151 to 209, and 210 to 268; these read EKCS…TCNK, KSCP…FCEK, EKCH…TCEL, and AGCK…KCVL. 8 disulfide bridges follow: Cys-25–Cys-68, Cys-53–Cys-81, Cys-86–Cys-131, Cys-116–Cys-148, Cys-153–Cys-194, Cys-180–Cys-207, Cys-212–Cys-254, and Cys-240–Cys-266. Asn-63 and Asn-111 each carry an N-linked (GlcNAc...) asparagine; by host glycan. An N-linked (GlcNAc...) asparagine; by host glycan is attached at Asn-197. 3 N-linked (GlcNAc...) asparagine; by host glycosylation sites follow: Asn-255, Asn-275, and Asn-299. Residues 269–338 form a disordered region; it reads EDIDDPNNSN…TSEGFNETTT (70 aa). 2 stretches are compositionally biased toward polar residues: residues 288–302 and 312–321; these read EKPN…NYTE and TAATCDTNCE. Residues Asn-334, Asn-371, Asn-374, and Asn-378 are each glycosylated (N-linked (GlcNAc...) asparagine; by host). 2 disordered regions span residues 387-408 and 420-516; these read TPTS…NYNT and IEEG…RPPA. Polar residues predominate over residues 424-440; sequence PSNSTTSEKATASTLSH. N-linked (GlcNAc...) asparagine; by host glycans are attached at residues Asn-426, Asn-445, Asn-455, and Asn-483. The segment covering 450–476 has biased composition (polar residues); the sequence is IYTTLNKTTQLPSTNKPTNSQAKSSTK. A compositionally biased stretch (polar residues) spans 484–495; sequence KTTSNPAISLTD. A helical membrane pass occupies residues 528-548; sequence IGLLTAVALTCGLITLFHYLF.

It localises to the host membrane. Its subcellular location is the virion membrane. Inhibits the complement component of the host innate immune response. Regulates host C3 convertases, accelerating their decay, and acts as a cofactor for factor I degradation of C4b and C3b. Also binds heparin, and therefore may play two distinct roles when incorporated in virion membranes: immune evasion and host cell binding. The polypeptide is Complement control protein (ORF4) (Human herpesvirus 8 type P (isolate GK18) (HHV-8)).